Reading from the N-terminus, the 312-residue chain is RNA pseudouridylate synthase domain-containing protein 1 (312 aa).

At Met-1 the chain carries N-acetylmethionine. Asp-67 is a catalytic residue. Residues 256–298 (ATPDPDPEDRGPRPGSPSALLPGPGRPPPPPTKPPETEAQRGP) form a disordered region. Positions 279–289 (PGRPPPPPTKP) are enriched in pro residues.

The protein belongs to the pseudouridine synthase RluA family.

The chain is RNA pseudouridylate synthase domain-containing protein 1 (RPUSD1) from Homo sapiens (Human).